Here is a 130-residue protein sequence, read N- to C-terminus: Small ribosomal subunit protein uS9 (130 aa).

The interval 109–130 (RAKERKKYGLKAARRAPQFSKR) is disordered. Basic residues predominate over residues 111-130 (KERKKYGLKAARRAPQFSKR).

The protein belongs to the universal ribosomal protein uS9 family.

This Heliobacterium modesticaldum (strain ATCC 51547 / Ice1) protein is Small ribosomal subunit protein uS9.